We begin with the raw amino-acid sequence, 3174 residues long: Probable polyketide synthase 15 (3174 aa).

Residues N23–Q474 form the Ketosynthase family 3 (KS3) domain. Active-site for beta-ketoacyl synthase activity residues include C194, H342, and H397. 2 coiled-coil regions span residues L472–N509 and E574–T604. A compositionally biased stretch (basic and acidic residues) spans Q578–L599. The interval Q578–R601 is disordered. The tract at residues G707–Y740 is acyl/malonyl transferase. S717 acts as the For acyl/malonyl transferase activity in catalysis. The N-terminal hotdog fold stretch occupies residues I1034–N1156. A PKS/mFAS DH domain is found at I1034–P1332. H1068 (proton acceptor; for dehydratase activity) is an active-site residue. The tract at residues N1182–P1332 is C-terminal hotdog fold. Residue D1241 is the Proton donor; for dehydratase activity of the active site. Residues L1758–V1793 adopt a coiled-coil conformation. One can recognise a Carrier domain in the interval V2653–I2730. O-(pantetheine 4'-phosphoryl)serine is present on S2690.

It depends on pantetheine 4'-phosphate as a cofactor.

Functionally, probable polyketide synthase. The protein is Probable polyketide synthase 15 (pks15) of Dictyostelium discoideum (Social amoeba).